Here is a 156-residue protein sequence, read N- to C-terminus: Putative pre-16S rRNA nuclease (156 aa).

The protein belongs to the YqgF nuclease family.

It is found in the cytoplasm. Could be a nuclease involved in processing of the 5'-end of pre-16S rRNA. The sequence is that of Putative pre-16S rRNA nuclease from Caulobacter vibrioides (strain ATCC 19089 / CIP 103742 / CB 15) (Caulobacter crescentus).